The chain runs to 216 residues: Probable nicotinate-nucleotide adenylyltransferase (216 aa).

This sequence belongs to the NadD family.

The catalysed reaction is nicotinate beta-D-ribonucleotide + ATP + H(+) = deamido-NAD(+) + diphosphate. It participates in cofactor biosynthesis; NAD(+) biosynthesis; deamido-NAD(+) from nicotinate D-ribonucleotide: step 1/1. In terms of biological role, catalyzes the reversible adenylation of nicotinate mononucleotide (NaMN) to nicotinic acid adenine dinucleotide (NaAD). This is Probable nicotinate-nucleotide adenylyltransferase from Pelobacter propionicus (strain DSM 2379 / NBRC 103807 / OttBd1).